Reading from the N-terminus, the 203-residue chain is Ras-like protein family member 10A (203 aa).

The small GTPase-like stretch occupies residues 1 to 203 (MGGSLRVAVL…ALHPARCSLM (203 aa)). 11–18 (GAPGVGKT) is a binding site for GTP. Positions 33–42 (HRPTDSPCLY) match the Effector region motif. Residues 59-62 (DGDV) and 129-132 (NKRD) each bind GTP. Cys-200 bears the Cysteine methyl ester mark. The S-farnesyl cysteine moiety is linked to residue Cys-200. The propeptide at 201–203 (SLM) is removed in mature form.

Belongs to the small GTPase superfamily. Ras family. Isoprenylation is essential for nucleolar localization, and the proliferation-inhibiting activity of RASL10A.

It localises to the cell membrane. The protein resides in the nucleus. Its subcellular location is the nucleolus. It carries out the reaction GTP + H2O = GDP + phosphate + H(+). Its function is as follows. Potent inhibitor of cellular proliferation. The protein is Ras-like protein family member 10A (Rasl10a) of Mus musculus (Mouse).